The following is a 318-amino-acid chain: NAC domain-containing protein 59 (318 aa).

The 151-residue stretch at 24 to 174 folds into the NAC domain; the sequence is LPPGFRFHPT…ECVISRVFHT (151 aa). The DNA-binding element occupies 121–180; the sequence is VGMKKTLVFYKGRAPKGVKTNWVMHEYRLEGKFAIDNLSKTAKNECVISRVFHTRTDGTK.

As to expression, mostly expressed in root cortex, phloem, atrichoblast and quiescent center (QC), and, to a lower extent, in root endodermis, xylem, pericycle, columella and lateral root cap (LRC). Expressed in roots, cotyledons, very young leaves, senescing leaves, mature flowers and pollen.

The protein localises to the nucleus. Its function is as follows. Transcription activator that binds to DNA in promoters of target genes on a specific bipartite motif 5'-[AG]CGT[AG](4-5n)[AG][CT]ACGCAA-3'. Triggers the expression of senescence-associated genes during age-, salt- and dark-induced senescence through a regulatory network that may involve cross-talk with salt- and H(2)O(2)-dependent signaling pathways. The polypeptide is NAC domain-containing protein 59 (Arabidopsis thaliana (Mouse-ear cress)).